The sequence spans 159 residues: Ribosomal RNA large subunit methyltransferase H (159 aa).

Residues I75, G108, and F127–L132 each bind S-adenosyl-L-methionine.

The protein belongs to the RNA methyltransferase RlmH family. In terms of assembly, homodimer.

Its subcellular location is the cytoplasm. The enzyme catalyses pseudouridine(1915) in 23S rRNA + S-adenosyl-L-methionine = N(3)-methylpseudouridine(1915) in 23S rRNA + S-adenosyl-L-homocysteine + H(+). Specifically methylates the pseudouridine at position 1915 (m3Psi1915) in 23S rRNA. The protein is Ribosomal RNA large subunit methyltransferase H of Lactococcus lactis subsp. lactis (strain IL1403) (Streptococcus lactis).